A 108-amino-acid chain; its full sequence is UPF0060 membrane protein YnfA (108 aa).

Over M1–T5 the chain is Periplasmic. The helical transmembrane segment at L6–L26 threads the bilayer. Over K27–A30 the chain is Cytoplasmic. A helical membrane pass occupies residues S31–L51. The Periplasmic segment spans residues H52–Y60. A helical membrane pass occupies residues A61 to V81. The Cytoplasmic portion of the chain corresponds to K82 to S84. Residues L85 to W105 form a helical membrane-spanning segment. At G106–T108 the chain is on the periplasmic side.

Belongs to the UPF0060 family.

It is found in the cell inner membrane. The sequence is that of UPF0060 membrane protein YnfA from Shigella flexneri serotype 5b (strain 8401).